A 247-amino-acid chain; its full sequence is Terpene cyclase adrI (247 aa).

The next 5 membrane-spanning stretches (helical) occupy residues 20–40, 51–71, 76–96, 112–132, and 141–161; these read VAEF…FSML, TGIF…FIYP, HWEG…FFII, NLYF…YSFA, and FFYG…AQIL. Asn164 is a glycosylation site (N-linked (GlcNAc...) asparagine). The next 2 helical transmembrane spans lie at 179–199 and 205–225; these read FGGF…GPWF and KFYI…YYVI.

The protein belongs to the paxB family.

The protein resides in the membrane. The protein operates within secondary metabolite biosynthesis; terpenoid biosynthesis. In terms of biological role, terpene cyclase; part of the gene cluster that mediates the biosynthesis of andrastins, meroterpenoid compounds that exhibit inhibitory activity against ras farnesyltransferase, suggesting that they could be promising leads for antitumor agents. The first step of the pathway is the synthesis of 3,5-dimethylorsellinic acid (DMOA) by the polyketide synthase adrD via condensation of one acetyl-CoA starter unit with 3 malonyl-CoA units and 2 methylations. DMAO is then converted to farnesyl-DMAO by the prenyltransferase adrG. The methyltransferase adrK catalyzes the methylation of the carboxyl group of farnesyl-DMAO to farnesyl-DMAO methyl ester which is further converted to epoxyfarnesyl-DMAO methyl ester by the FAD-dependent monooxygenase adrH. The terpene cyclase adrI then catalyzes the carbon skeletal rearrangement to generate the andrastin E, the first compound in the pathway having the andrastin scaffold, with the tetracyclic ring system. The post-cyclization tailoring enzymes adrF, adrE, adrJ, and adrA, are involved in the conversion of andrastin E into andrastin A. The short chain dehydrogenase adrF is responsible for the oxidation of the C-3 a hydroxyl group of andrastin E to yield the corresponding ketone, andrastin D. The ketoreductase adrE stereoselectively reduces the carbonyl moiety to reverse the stereochemistry of the C-3 position to yield andrastin F. The acetyltransferase adrJ is the acetyltransferase that attaches the acetyl group to the C-3 hydroxyl group of andrastin F to yield andrastin C. Finally, the cytochrome P450 monooxygenase adrA catalyzes two sequential oxidation reactions of the C-23 methyl group, to generate the corresponding alcohol andrastin B, and aldehyde andrastin A. The polypeptide is Terpene cyclase adrI (Penicillium rubens (strain ATCC 28089 / DSM 1075 / NRRL 1951 / Wisconsin 54-1255) (Penicillium chrysogenum)).